The chain runs to 294 residues: Retinoic acid receptor responder protein 1 (294 aa).

The Lumenal segment spans residues 1 to 20 (MQPRRQRLPAPWSGPRGPRP). Residues 21–42 (TAPLLALLLLLAPVAAPAGSGD) traverse the membrane as a helical; Signal-anchor for type III membrane protein segment. Cystatin LXN-type domains are found at residues 38–153 (AGSG…EKKK) and 173–276 (EIVS…TPEE). Ser40 is a glycosylation site (O-linked (Xyl...) (chondroitin sulfate) serine). Over 43 to 294 (PDDPGQPQDA…AVVPTELSNF (252 aa)) the chain is Cytoplasmic. Positions 273-294 (TPEEASGTEEGSAVVPTELSNF) are disordered.

Belongs to the protease inhibitor I47 (latexin) family. As to quaternary structure, interacts with AGBL2, KIF11 and MAPRE1. In terms of processing, not N-glycosylated. O-glycosylated; contains chondroitin sulfate. Detected in urine (at protein level).

It localises to the membrane. It is found in the secreted. Inhibitor of the cytoplasmic carboxypeptidase AGBL2, may regulate the alpha-tubulin tyrosination cycle. This Homo sapiens (Human) protein is Retinoic acid receptor responder protein 1 (RARRES1).